A 124-amino-acid polypeptide reads, in one-letter code: Histone H2A (124 aa).

The segment covering 1 to 18 (MSGRGKGGKAKGKSKTRS) has biased composition (basic residues). The interval 1–23 (MSGRGKGGKAKGKSKTRSSRAGL) is disordered. The residue at position 2 (Ser2) is an N-acetylserine. A Phosphoserine modification is found at Ser2. Gln104 is subject to N5-methylglutamine.

Belongs to the histone H2A family. In terms of assembly, the nucleosome is a histone octamer containing two molecules each of H2A, H2B, H3 and H4 assembled in one H3-H4 heterotetramer and two H2A-H2B heterodimers. The octamer wraps approximately 147 bp of DNA. Post-translationally, phosphorylation of Ser-2 directly represses transcription.

Its subcellular location is the nucleus. It is found in the chromosome. In terms of biological role, core component of nucleosome. Nucleosomes wrap and compact DNA into chromatin, limiting DNA accessibility to the cellular machineries which require DNA as a template. Histones thereby play a central role in transcription regulation, DNA repair, DNA replication and chromosomal stability. DNA accessibility is regulated via a complex set of post-translational modifications of histones, also called histone code, and nucleosome remodeling. In Platynereis dumerilii (Dumeril's clam worm), this protein is Histone H2A.